Consider the following 137-residue polypeptide: Actin-depolymerizing factor 12 (137 aa).

Phosphoserine is present on Ser6. Positions 7–137 (GMAVEDECKL…SLDIIKSRAL (131 aa)) constitute an ADF-H domain.

It belongs to the actin-binding proteins ADF family. Specifically expressed in pollen.

It localises to the cytoplasm. It is found in the cytoskeleton. Actin-depolymerizing protein. Severs actin filaments (F-actin) and binds to actin monomers. This is Actin-depolymerizing factor 12 from Arabidopsis thaliana (Mouse-ear cress).